Consider the following 637-residue polypeptide: 3D-(3,5/4)-trihydroxycyclohexane-1,2-dione hydrolase (637 aa).

Glu66 contacts thiamine diphosphate. The tract at residues 442 to 522 is thiamine pyrophosphate binding; it reads SLPGDLQRLW…INVLLFDNSG (81 aa). Residues Asp493 and Asn520 each contribute to the Mg(2+) site.

Belongs to the TPP enzyme family. It depends on Mg(2+) as a cofactor. Thiamine diphosphate serves as cofactor.

The enzyme catalyses 3D-3,5/4-trihydroxycyclohexane-1,2-dione + H2O = 5-deoxy-D-glucuronate + H(+). It participates in polyol metabolism; myo-inositol degradation into acetyl-CoA; acetyl-CoA from myo-inositol: step 3/7. Functionally, involved in the cleavage of the C1-C2 bond of 3D-(3,5/4)-trihydroxycyclohexane-1,2-dione (THcHDO) to yield 5-deoxy-glucuronate (5DG). This chain is 3D-(3,5/4)-trihydroxycyclohexane-1,2-dione hydrolase, found in Bacillus licheniformis (strain ATCC 14580 / DSM 13 / JCM 2505 / CCUG 7422 / NBRC 12200 / NCIMB 9375 / NCTC 10341 / NRRL NRS-1264 / Gibson 46).